A 311-amino-acid polypeptide reads, in one-letter code: Tyrosine recombinase XerD (311 aa).

The Core-binding (CB) domain occupies 3 to 88; sequence DMSAAYVEAF…ALRQFYKFLY (86 aa). The 190-residue stretch at 109 to 298 folds into the Tyr recombinase domain; sequence TLPKTLSIED…LEERLHDLVQ (190 aa). Residues Arg-156, Lys-180, His-250, Arg-253, and His-276 contribute to the active site. The O-(3'-phospho-DNA)-tyrosine intermediate role is filled by Tyr-285.

The protein belongs to the 'phage' integrase family. XerD subfamily. As to quaternary structure, forms a cyclic heterotetrameric complex composed of two molecules of XerC and two molecules of XerD.

It is found in the cytoplasm. Site-specific tyrosine recombinase, which acts by catalyzing the cutting and rejoining of the recombining DNA molecules. The XerC-XerD complex is essential to convert dimers of the bacterial chromosome into monomers to permit their segregation at cell division. It also contributes to the segregational stability of plasmids. The chain is Tyrosine recombinase XerD from Rhizobium meliloti (strain 1021) (Ensifer meliloti).